Consider the following 481-residue polypeptide: Aspartyl/glutamyl-tRNA(Asn/Gln) amidotransferase subunit B (481 aa).

This sequence belongs to the GatB/GatE family. GatB subfamily. In terms of assembly, heterotrimer of A, B and C subunits.

It catalyses the reaction L-glutamyl-tRNA(Gln) + L-glutamine + ATP + H2O = L-glutaminyl-tRNA(Gln) + L-glutamate + ADP + phosphate + H(+). The enzyme catalyses L-aspartyl-tRNA(Asn) + L-glutamine + ATP + H2O = L-asparaginyl-tRNA(Asn) + L-glutamate + ADP + phosphate + 2 H(+). In terms of biological role, allows the formation of correctly charged Asn-tRNA(Asn) or Gln-tRNA(Gln) through the transamidation of misacylated Asp-tRNA(Asn) or Glu-tRNA(Gln) in organisms which lack either or both of asparaginyl-tRNA or glutaminyl-tRNA synthetases. The reaction takes place in the presence of glutamine and ATP through an activated phospho-Asp-tRNA(Asn) or phospho-Glu-tRNA(Gln). The sequence is that of Aspartyl/glutamyl-tRNA(Asn/Gln) amidotransferase subunit B from Prosthecochloris aestuarii (strain DSM 271 / SK 413).